We begin with the raw amino-acid sequence, 788 residues long: Pre-rRNA-processing protein TSR1 homolog (788 aa).

The interval methionine 1–valine 40 is disordered. Residues glycine 9–arginine 25 show a composition bias toward basic residues. Positions threonine 26 to valine 40 are enriched in basic and acidic residues. The region spanning alanine 83 to lysine 243 is the Bms1-type G domain. Positions leucine 354–isoleucine 433 are disordered. The segment covering aspartate 378–proline 412 has biased composition (acidic residues).

Belongs to the TRAFAC class translation factor GTPase superfamily. Bms1-like GTPase family. TSR1 subfamily.

The protein resides in the nucleus. It localises to the nucleolus. Functionally, required during maturation of the 40S ribosomal subunit in the nucleolus. In Caenorhabditis briggsae, this protein is Pre-rRNA-processing protein TSR1 homolog.